The following is a 257-amino-acid chain: Baramicin A1 (257 aa).

The signal sequence occupies residues 1–19; it reads MKSFGLIALAICGVICVAA. The propeptide occupies 20–21; sequence EP. The residue at position 22 (Q22) is a Pyrrolidone carboxylic acid. Residues 95–122 are disordered; that stretch reads GPNFSAKNLGPNGAKSVGIPQRARRSPQ. The N-linked (GlcNAc...) asparagine glycan is linked to N97. Positions 118-121 are excised as a propeptide; it reads RRSP. Q122 bears the Pyrrolidone carboxylic acid mark. Residues 145-148 constitute a propeptide that is removed on maturation; the sequence is RRSP. Q149 carries the pyrrolidone carboxylic acid modification. Residues 172 to 175 constitute a propeptide that is removed on maturation; the sequence is RRSP. Pyrrolidone carboxylic acid is present on Q176. A propeptide spanning residues 199-204 is cleaved from the precursor; sequence RRGIND. The N-linked (GlcNAc...) asparagine glycan is linked to N225.

Proteolytically cleaved. In terms of tissue distribution, hemolymph (at protein level).

It localises to the secreted. In terms of biological role, secreted immune-induced peptides induced by Toll signaling. Has a significant role in resistance to infection by the entomopathogenic fungus B.bassiana R444 and weak antifungal activity against M.rileyi PHP1705. In adult males, activity appears to be important for neuromuscular processes that mediate correct wing posture upon Toll activation. The polypeptide is Baramicin A1 (Drosophila melanogaster (Fruit fly)).